Consider the following 379-residue polypeptide: Cytochrome b (379 aa).

The next 4 helical transmembrane spans lie at 33–53, 77–98, 113–133, and 178–198; these read FGSLLGLCLISQIITGLFLAM, WLIRNLHANGASFFFICLYLHI, WNIGVVLFLLVMMTAFVGYVL, and FFAFHFLFPFVVAGATMIHLL. Heme b contacts are provided by histidine 83 and histidine 97. Heme b is bound by residues histidine 182 and histidine 196. An a ubiquinone-binding site is contributed by histidine 201. Transmembrane regions (helical) follow at residues 226–246, 288–308, 320–340, and 347–367; these read YKDLLGFIIMLTALTMLALFY, LGGVLALLSSILVLMVVPILH, ASQLLFWILVADMLVLTWIGG, and YIIIGQVASVLYFSLFLVLNP.

This sequence belongs to the cytochrome b family. In terms of assembly, the cytochrome bc1 complex contains 3 respiratory subunits (MT-CYB, CYC1 and UQCRFS1), 2 core proteins (UQCRC1 and UQCRC2) and probably 6 low-molecular weight proteins. The cofactor is heme b.

It localises to the mitochondrion inner membrane. Its function is as follows. Component of the ubiquinol-cytochrome c reductase complex (complex III or cytochrome b-c1 complex) that is part of the mitochondrial respiratory chain. The b-c1 complex mediates electron transfer from ubiquinol to cytochrome c. Contributes to the generation of a proton gradient across the mitochondrial membrane that is then used for ATP synthesis. This is Cytochrome b (mt-cyb) from Anguilla interioris (Highlands long-finned eel).